The sequence spans 320 residues: tRNA uridine(34) hydroxylase (320 aa).

The region spanning 125–221 is the Rhodanese domain; sequence KEKRPLLLDV…YGLKQGSEHW (97 aa). The active-site Cysteine persulfide intermediate is Cys181.

Belongs to the TrhO family.

It carries out the reaction uridine(34) in tRNA + AH2 + O2 = 5-hydroxyuridine(34) in tRNA + A + H2O. In terms of biological role, catalyzes oxygen-dependent 5-hydroxyuridine (ho5U) modification at position 34 in tRNAs. The sequence is that of tRNA uridine(34) hydroxylase from Protochlamydia amoebophila (strain UWE25).